The primary structure comprises 108 residues: Replication restart protein PriB (108 aa).

In terms of domain architecture, SSB spans 8–108; that stretch reads IDNSFSVMGV…LHAEQIEFID (101 aa).

Belongs to the PriB family. As to quaternary structure, homodimer. Interacts with PriA and DnaT. Component of the replication restart primosome. Primosome assembly occurs via a 'hand-off' mechanism. PriA binds to replication forks, subsequently PriB then DnaT bind; DnaT then displaces ssDNA to generate the helicase loading substrate.

Involved in the restart of stalled replication forks, which reloads the replicative helicase on sites other than the origin of replication; the PriA-PriB pathway is the major replication restart pathway. During primosome assembly it facilitates complex formation between PriA and DnaT on DNA; stabilizes PriA on DNA. Stimulates the DNA unwinding activity of PriA helicase. This Haemophilus influenzae (strain ATCC 51907 / DSM 11121 / KW20 / Rd) protein is Replication restart protein PriB.